We begin with the raw amino-acid sequence, 274 residues long: Putative phosphatase BUsg_029 (274 aa).

The active-site Nucleophile is aspartate 8. Position 8 (aspartate 8) interacts with Mg(2+). Leucine 9 contributes to the phosphate binding site. Aspartate 10 is a binding site for Mg(2+). Phosphate-binding positions include 42–43 and lysine 191; that span reads SG. Mg(2+) is bound at residue aspartate 214. A phosphate-binding site is contributed by asparagine 217.

This sequence belongs to the HAD-like hydrolase superfamily. Cof family. Mg(2+) is required as a cofactor.

In Buchnera aphidicola subsp. Schizaphis graminum (strain Sg), this protein is Putative phosphatase BUsg_029.